Here is a 347-residue protein sequence, read N- to C-terminus: GPN-loop GTPase 2 (347 aa).

Position 12 to 17 (12 to 17 (GSGKST)) interacts with GTP. Positions 69–71 (GPN) match the Gly-Pro-Asn (GPN)-loop; involved in dimer interface motif. 175-178 (SKID) contacts GTP.

It belongs to the GPN-loop GTPase family. As to quaternary structure, heterodimers with NPA3/GPN1 or GPN3. Binds to RNA polymerase II (RNAPII).

It is found in the cytoplasm. Small GTPase required for proper localization of RNA polymerase II and III (RNAPII and RNAPIII). May act at an RNAP assembly step prior to nuclear import. Required for establishment of sister chromatid cohesion. The polypeptide is GPN-loop GTPase 2 (Saccharomyces cerevisiae (strain ATCC 204508 / S288c) (Baker's yeast)).